The chain runs to 499 residues: Probable cytosol aminopeptidase (499 aa).

Mn(2+)-binding residues include Lys-269 and Asp-274. Residue Lys-281 is part of the active site. 3 residues coordinate Mn(2+): Asp-292, Asp-351, and Glu-353. Arg-355 is an active-site residue.

Belongs to the peptidase M17 family. Mn(2+) is required as a cofactor.

It is found in the cytoplasm. The enzyme catalyses Release of an N-terminal amino acid, Xaa-|-Yaa-, in which Xaa is preferably Leu, but may be other amino acids including Pro although not Arg or Lys, and Yaa may be Pro. Amino acid amides and methyl esters are also readily hydrolyzed, but rates on arylamides are exceedingly low.. It carries out the reaction Release of an N-terminal amino acid, preferentially leucine, but not glutamic or aspartic acids.. In terms of biological role, presumably involved in the processing and regular turnover of intracellular proteins. Catalyzes the removal of unsubstituted N-terminal amino acids from various peptides. The polypeptide is Probable cytosol aminopeptidase (Actinobacillus pleuropneumoniae serotype 5b (strain L20)).